A 353-amino-acid polypeptide reads, in one-letter code: MSVAGLKKQFHKASQLFSEKISGAEGTKLDEEFQEMERKIDVTNKAVAELLSKSTEYLQPNPAYRAKLGMLNTMSKIRGQVKTTGYPQTEGLLGDCMIRYGRELGDDSMFGLALLDAGESMKQMAEVKDSLDINVKQNFIDPLQLLQDKDLKEIGHHLKKLEGRRLDYDYKKKRLGKIPDEEVKQAVEKFEESKELAERSMFNFLENDVEQVSQLAVFVEAALDYHKQSTEILEDLQSKLQNRINVASSRPKREFKPKPVITTTLETGDNQQHNGIAYSSSIKSSGSSMHVDQPCCQALYDFEPENEGELGFKEGDIITLTNQIDENWYEGMLNGESGFFPHNYVEVMVPLPQ.

Residues 1–21 (MSVAGLKKQFHKASQLFSEKI) are membrane-binding amphipathic helix. A BAR domain is found at 18–249 (SEKISGAEGT…LQNRINVASS (232 aa)). Residues 60–87 (PNPAYRAKLGMLNTMSKIRGQVKTTGYP) form a required for dimerization upon membrane association region. Residues 180-201 (DEEVKQAVEKFEESKELAERSM) are a coiled coil. Positions 218 to 254 (FVEAALDYHKQSTEILEDLQSKLQNRINVASSRPKRE) are interaction with ARC. In terms of domain architecture, SH3 spans 291–350 (VDQPCCQALYDFEPENEGELGFKEGDIITLTNQIDENWYEGMLNGESGFFPHNYVEVMVP).

Belongs to the endophilin family. As to quaternary structure, interacts with ARC. Interacts with SYNJ1 and DNM1. Highest level in a region associated with endocytosis of yolk proteins in developing oocytes (at protein level). Highest level in small ovarian follicles. High levels in brain and testis. Lower level in adrenal glands.

The protein localises to the cytoplasm. Its subcellular location is the early endosome membrane. Its function is as follows. Implicated in endocytosis. May recruit other proteins to membranes with high curvature. Implicated in endocytosis of yolk proteins during oogenesis. The sequence is that of Endophilin-A3 from Gallus gallus (Chicken).